The sequence spans 232 residues: Phosphatidylserine decarboxylase proenzyme (232 aa).

Serine 190 serves as the catalytic Schiff-base intermediate with substrate; via pyruvic acid. A Pyruvic acid (Ser); by autocatalysis modification is found at serine 190.

Belongs to the phosphatidylserine decarboxylase family. PSD-A subfamily. In terms of assembly, heterodimer of a large membrane-associated beta subunit and a small pyruvoyl-containing alpha subunit. It depends on pyruvate as a cofactor. Post-translationally, is synthesized initially as an inactive proenzyme. Formation of the active enzyme involves a self-maturation process in which the active site pyruvoyl group is generated from an internal serine residue via an autocatalytic post-translational modification. Two non-identical subunits are generated from the proenzyme in this reaction, and the pyruvate is formed at the N-terminus of the alpha chain, which is derived from the carboxyl end of the proenzyme. The post-translation cleavage follows an unusual pathway, termed non-hydrolytic serinolysis, in which the side chain hydroxyl group of the serine supplies its oxygen atom to form the C-terminus of the beta chain, while the remainder of the serine residue undergoes an oxidative deamination to produce ammonia and the pyruvoyl prosthetic group on the alpha chain.

The protein resides in the cell membrane. It carries out the reaction a 1,2-diacyl-sn-glycero-3-phospho-L-serine + H(+) = a 1,2-diacyl-sn-glycero-3-phosphoethanolamine + CO2. The protein operates within phospholipid metabolism; phosphatidylethanolamine biosynthesis; phosphatidylethanolamine from CDP-diacylglycerol: step 2/2. In terms of biological role, catalyzes the formation of phosphatidylethanolamine (PtdEtn) from phosphatidylserine (PtdSer). The protein is Phosphatidylserine decarboxylase proenzyme of Cereibacter sphaeroides (strain ATCC 17023 / DSM 158 / JCM 6121 / CCUG 31486 / LMG 2827 / NBRC 12203 / NCIMB 8253 / ATH 2.4.1.) (Rhodobacter sphaeroides).